We begin with the raw amino-acid sequence, 394 residues long: Nicotinate phosphoribosyltransferase (394 aa).

His-218 carries the phosphohistidine; by autocatalysis modification.

The protein belongs to the NAPRTase family. Transiently phosphorylated on a His residue during the reaction cycle. Phosphorylation strongly increases the affinity for substrates and increases the rate of nicotinate D-ribonucleotide production. Dephosphorylation regenerates the low-affinity form of the enzyme, leading to product release.

The enzyme catalyses nicotinate + 5-phospho-alpha-D-ribose 1-diphosphate + ATP + H2O = nicotinate beta-D-ribonucleotide + ADP + phosphate + diphosphate. It functions in the pathway cofactor biosynthesis; NAD(+) biosynthesis; nicotinate D-ribonucleotide from nicotinate: step 1/1. Catalyzes the synthesis of beta-nicotinate D-ribonucleotide from nicotinate and 5-phospho-D-ribose 1-phosphate at the expense of ATP. The sequence is that of Nicotinate phosphoribosyltransferase from Xylella fastidiosa (strain 9a5c).